The following is a 378-amino-acid chain: Erythronate-4-phosphate dehydrogenase (378 aa).

2 residues coordinate substrate: Ser-45 and Thr-66. 2 residues coordinate NAD(+): Asp-146 and Thr-175. Residue Arg-208 is part of the active site. Asp-232 lines the NAD(+) pocket. Glu-237 is an active-site residue. The active-site Proton donor is the His-254. Residue Gly-257 participates in NAD(+) binding. Residue Tyr-258 coordinates substrate.

It belongs to the D-isomer specific 2-hydroxyacid dehydrogenase family. PdxB subfamily. As to quaternary structure, homodimer.

It localises to the cytoplasm. It carries out the reaction 4-phospho-D-erythronate + NAD(+) = (R)-3-hydroxy-2-oxo-4-phosphooxybutanoate + NADH + H(+). It functions in the pathway cofactor biosynthesis; pyridoxine 5'-phosphate biosynthesis; pyridoxine 5'-phosphate from D-erythrose 4-phosphate: step 2/5. In terms of biological role, catalyzes the oxidation of erythronate-4-phosphate to 3-hydroxy-2-oxo-4-phosphonooxybutanoate. The protein is Erythronate-4-phosphate dehydrogenase of Escherichia coli O157:H7.